The chain runs to 602 residues: NADH-quinone oxidoreductase subunit C/D (602 aa).

The interval 1–192 (MVNNMTDLTA…DPFELTKAKQ (192 aa)) is NADH dehydrogenase I subunit C. The interval 216–602 (DFMFLNLGPN…IDFVMSDVDR (387 aa)) is NADH dehydrogenase I subunit D.

It in the N-terminal section; belongs to the complex I 30 kDa subunit family. This sequence in the C-terminal section; belongs to the complex I 49 kDa subunit family. As to quaternary structure, NDH-1 is composed of 13 different subunits. Subunits NuoB, CD, E, F, and G constitute the peripheral sector of the complex.

It localises to the cell inner membrane. It carries out the reaction a quinone + NADH + 5 H(+)(in) = a quinol + NAD(+) + 4 H(+)(out). In terms of biological role, NDH-1 shuttles electrons from NADH, via FMN and iron-sulfur (Fe-S) centers, to quinones in the respiratory chain. The immediate electron acceptor for the enzyme in this species is believed to be ubiquinone. Couples the redox reaction to proton translocation (for every two electrons transferred, four hydrogen ions are translocated across the cytoplasmic membrane), and thus conserves the redox energy in a proton gradient. This Klebsiella pneumoniae (strain 342) protein is NADH-quinone oxidoreductase subunit C/D.